Reading from the N-terminus, the 209-residue chain is Molybdenum cofactor guanylyltransferase (209 aa).

GTP is bound by residues 14–16 (LAG), Lys-31, and Asp-104. Asp-104 is a Mg(2+) binding site.

The protein belongs to the MobA family. In terms of assembly, monomer. The cofactor is Mg(2+).

The protein resides in the cytoplasm. It carries out the reaction Mo-molybdopterin + GTP + H(+) = Mo-molybdopterin guanine dinucleotide + diphosphate. Functionally, transfers a GMP moiety from GTP to Mo-molybdopterin (Mo-MPT) cofactor (Moco or molybdenum cofactor) to form Mo-molybdopterin guanine dinucleotide (Mo-MGD) cofactor. The chain is Molybdenum cofactor guanylyltransferase from Helicobacter pylori (strain J99 / ATCC 700824) (Campylobacter pylori J99).